The primary structure comprises 327 residues: Glycerol-3-phosphate dehydrogenase [NAD(P)+] (327 aa).

NADPH is bound by residues tryptophan 11, arginine 30, and lysine 103. 3 residues coordinate sn-glycerol 3-phosphate: lysine 103, glycine 131, and serine 133. Position 135 (alanine 135) interacts with NADPH. Sn-glycerol 3-phosphate-binding residues include lysine 186, aspartate 243, serine 253, arginine 254, and asparagine 255. The Proton acceptor role is filled by lysine 186. Residue arginine 254 participates in NADPH binding. 2 residues coordinate NADPH: valine 281 and glutamate 283.

This sequence belongs to the NAD-dependent glycerol-3-phosphate dehydrogenase family.

The protein resides in the cytoplasm. It catalyses the reaction sn-glycerol 3-phosphate + NAD(+) = dihydroxyacetone phosphate + NADH + H(+). The enzyme catalyses sn-glycerol 3-phosphate + NADP(+) = dihydroxyacetone phosphate + NADPH + H(+). It participates in membrane lipid metabolism; glycerophospholipid metabolism. Functionally, catalyzes the reduction of the glycolytic intermediate dihydroxyacetone phosphate (DHAP) to sn-glycerol 3-phosphate (G3P), the key precursor for phospholipid synthesis. The sequence is that of Glycerol-3-phosphate dehydrogenase [NAD(P)+] from Wolbachia sp. subsp. Drosophila simulans (strain wRi).